Here is a 539-residue protein sequence, read N- to C-terminus: GMP synthase [glutamine-hydrolyzing] (539 aa).

The 200-residue stretch at 4-203 (KILILDFGSQ…VHDICGCKSD (200 aa)) folds into the Glutamine amidotransferase type-1 domain. Residue Cys-82 is the Nucleophile of the active site. Residues His-177 and Glu-179 contribute to the active site. The GMPS ATP-PPase domain maps to 204–395 (WNMPDYIAEA…LGLPHDMVYR (192 aa)). ATP is bound at residue 231–237 (SGGVDSS).

Homodimer.

It carries out the reaction XMP + L-glutamine + ATP + H2O = GMP + L-glutamate + AMP + diphosphate + 2 H(+). Its pathway is purine metabolism; GMP biosynthesis; GMP from XMP (L-Gln route): step 1/1. Functionally, catalyzes the synthesis of GMP from XMP. The sequence is that of GMP synthase [glutamine-hydrolyzing] from Herminiimonas arsenicoxydans.